Consider the following 389-residue polypeptide: 8-amino-7-oxononanoate synthase (389 aa).

A substrate-binding site is contributed by R31. 109–110 (GY) is a pyridoxal 5'-phosphate binding site. Residue H134 participates in substrate binding. Pyridoxal 5'-phosphate is bound by residues S180, 205 to 208 (DEAH), and 236 to 239 (TLSK). Position 239 is an N6-(pyridoxal phosphate)lysine (K239). Substrate is bound at residue T349.

The protein belongs to the class-II pyridoxal-phosphate-dependent aminotransferase family. BioF subfamily. In terms of assembly, homodimer. It depends on pyridoxal 5'-phosphate as a cofactor.

It carries out the reaction 6-carboxyhexanoyl-[ACP] + L-alanine + H(+) = (8S)-8-amino-7-oxononanoate + holo-[ACP] + CO2. Its pathway is cofactor biosynthesis; biotin biosynthesis. Functionally, catalyzes the decarboxylative condensation of pimeloyl-[acyl-carrier protein] and L-alanine to produce 8-amino-7-oxononanoate (AON), [acyl-carrier protein], and carbon dioxide. This is 8-amino-7-oxononanoate synthase from Mycobacterium ulcerans (strain Agy99).